The chain runs to 426 residues: Serine/threonine-protein kinase ssn3 (426 aa).

The Protein kinase domain occupies 41–368 (YHIVGFISSG…AREALEHPYF (328 aa)). Residues 47 to 55 (ISSGTYGRV) and K71 each bind ATP. D173 (proton acceptor) is an active-site residue. The interval 390–426 (RVTQDDNDIRSGSLPGTKRSGLPDDSLMGRAAKRLKE) is disordered.

This sequence belongs to the protein kinase superfamily. CMGC Ser/Thr protein kinase family. CDC2/CDKX subfamily. Component of the srb8-11 complex, a regulatory module of the Mediator complex. The cofactor is Mg(2+).

Its subcellular location is the nucleus. It carries out the reaction L-seryl-[protein] + ATP = O-phospho-L-seryl-[protein] + ADP + H(+). The catalysed reaction is L-threonyl-[protein] + ATP = O-phospho-L-threonyl-[protein] + ADP + H(+). The enzyme catalyses [DNA-directed RNA polymerase] + ATP = phospho-[DNA-directed RNA polymerase] + ADP + H(+). Its function is as follows. Component of the srb8-11 complex. The srb8-11 complex is a regulatory module of the Mediator complex which is itself involved in regulation of basal and activated RNA polymerase II-dependent transcription. The srb8-11 complex may be involved in the transcriptional repression of a subset of genes regulated by Mediator. It may inhibit the association of the Mediator complex with RNA polymerase II to form the holoenzyme complex. The srb8-11 complex phosphorylates the C-terminal domain (CTD) of the largest subunit of RNA polymerase II. In Aspergillus fumigatus (strain ATCC MYA-4609 / CBS 101355 / FGSC A1100 / Af293) (Neosartorya fumigata), this protein is Serine/threonine-protein kinase ssn3 (ssn3).